Consider the following 330-residue polypeptide: 6-methylsalicylic acid decarboxylase acuB (330 aa).

4 residues coordinate Zn(2+): H6, H8, H156, and D276.

This sequence belongs to the metallo-dependent hydrolases superfamily. ACMSD family. In terms of assembly, monomer.

It is found in the cytoplasm. The protein resides in the cytosol. It carries out the reaction 6-methylsalicylate + H(+) = 3-methylphenol + CO2. Its pathway is secondary metabolite biosynthesis. Its function is as follows. 6-methylsalicylic acid decarboxylase; part of the gene cluster that mediates the biosynthesis of aculins. The pathway begins with the synthesis of 6-methylsalicylic acid by the polyketide synthase (PKS) acuA via condensation of acetate and malonate units. The 6-methylsalicylic acid decarboxylase acuB then catalyzes the decarboxylation of 6-methylsalicylic acid to yield m-cresol (also known as 3-methylphenol). These first reactions occur in the cytosol. The intermediate m-cresol is then transported into the endoplasmic reticulum where the cytochrome P450 monooxygenase acuC converts it to m-hydroxybenzyl alcohol, which is further converted to gentisyl alcohol by the cytochrome P450 monooxygenase acuD. Gentisyl alcohol is further oxidized by the oxidoreductase acuE that probably catalyzes hydroxylation of the aromatic ring. The aromatic system might then be opened by oxidation through a Baeyer-Villiger type of oxidation, which could be catalyzed by acuF, with the carboxylic acid at C-1 subsequently reduced to an aldehyde by acuG. Subsequently, a hemiacetal is formed, before the dehydrogenase acuH would reduce the double bond between C-4 and C-6. Finally, keto-enol tautomerism results in formation of aculinic acid, which exists as two diastereomers (both R/S configurations at C-1) by non-enzymatic hemiacetal formation. The carboxypeptidase acuI could be involved in the linking of aculinic acid to an aculene A moiety produced by the aculene biosynthesis cluster and which leads to the production of aculin A. AcuI may also be involved in the attachment of proline to aculinic acid to form epi-aculins A and B. This Aspergillus aculeatus (strain ATCC 16872 / CBS 172.66 / WB 5094) protein is 6-methylsalicylic acid decarboxylase acuB.